Here is a 300-residue protein sequence, read N- to C-terminus: Cis-3-alkyl-4-alkyloxetan-2-one decarboxylase (300 aa).

An AB hydrolase-1 domain is found at 33–282 (VVVMLHGNPS…DDANHYVLED (250 aa)).

The protein belongs to the AB hydrolase superfamily. As to quaternary structure, homotetramer. Forms a complex with OleC and OleD.

Its subcellular location is the cytoplasm. The enzyme catalyses a cis-3-alkyl-4-alkyloxetan-2-one = a cis-alkene + CO2. Functionally, involved in olefin biosynthesis. Catalyzes the elimination of carbon dioxide from beta-lactones to form the final olefin product. In Xanthomonas campestris pv. campestris (strain ATCC 33913 / DSM 3586 / NCPPB 528 / LMG 568 / P 25), this protein is Cis-3-alkyl-4-alkyloxetan-2-one decarboxylase.